Reading from the N-terminus, the 545-residue chain is MATNYIFVTGGVVSSLGKGIAAASLASILEARGLNVTIMKLDPYINVDPGTMSPTQHGEVFVTQDGAETDLDLGHYERFIRSKMSKANNFTSGKIYSEVLRKERRGDYLGATIQVIPHITNEIKERVIEGGKGRDVVIVEVGGTVGDIESLPFLEALRQLAVDVGREKTLFMHLTLVPYIPTAGEVKTKPTQHSVKELLSIGIQPDVLICRSDRAIPSNERKKIALFCNVPERAVISLKDVDSIYRIPELLKSQGLDTFVCDRFRLDCPEADLSEWEQVLYRQANPTGEVTIGMVGKYVELPDAYKSVNEALKHAGLTNRLTVNIKYIDSQDIETKGVELLHGLDAILVPGGFGYRGVEGKIRTAQYARENKIPYLGICLGMQIALIEYARNVAGLTQANSSEFDKDCPQPVVGLITEWQDESGNVETRSDESDLGGTMRLGAQQCHLIEGTKAREVYGAETIVERHRHRYEVNNTLLPQIEAAGLKVSGLSADRKLVEIIEIPNHPWFIAAQFHPEFTSTPRDGHPLFAGFVAAAKAYQDSHKA.

An amidoligase domain region spans residues 1-266 (MATNYIFVTG…DTFVCDRFRL (266 aa)). Position 14 (S14) interacts with CTP. UTP is bound at residue S14. ATP contacts are provided by residues 15 to 20 (SLGKGI) and D72. The Mg(2+) site is built by D72 and E140. Residues 147-149 (DIE), 187-192 (KTKPTQ), and K223 each bind CTP. Residues 187–192 (KTKPTQ) and K223 contribute to the UTP site. 239–241 (KDV) serves as a coordination point for ATP. One can recognise a Glutamine amidotransferase type-1 domain in the interval 291-542 (TIGMVGKYVE…VAAAKAYQDS (252 aa)). G352 contacts L-glutamine. The active-site Nucleophile; for glutamine hydrolysis is C379. L-glutamine is bound by residues 380–383 (LGMQ), E403, and R470. Active-site residues include H515 and E517.

Belongs to the CTP synthase family. As to quaternary structure, homotetramer.

It catalyses the reaction UTP + L-glutamine + ATP + H2O = CTP + L-glutamate + ADP + phosphate + 2 H(+). The enzyme catalyses L-glutamine + H2O = L-glutamate + NH4(+). It carries out the reaction UTP + NH4(+) + ATP = CTP + ADP + phosphate + 2 H(+). It participates in pyrimidine metabolism; CTP biosynthesis via de novo pathway; CTP from UDP: step 2/2. With respect to regulation, allosterically activated by GTP, when glutamine is the substrate; GTP has no effect on the reaction when ammonia is the substrate. The allosteric effector GTP functions by stabilizing the protein conformation that binds the tetrahedral intermediate(s) formed during glutamine hydrolysis. Inhibited by the product CTP, via allosteric rather than competitive inhibition. In terms of biological role, catalyzes the ATP-dependent amination of UTP to CTP with either L-glutamine or ammonia as the source of nitrogen. Regulates intracellular CTP levels through interactions with the four ribonucleotide triphosphates. This is CTP synthase from Actinobacillus pleuropneumoniae serotype 5b (strain L20).